The chain runs to 176 residues: Adenine phosphoribosyltransferase (176 aa).

It belongs to the purine/pyrimidine phosphoribosyltransferase family. Homodimer.

The protein resides in the cytoplasm. The catalysed reaction is AMP + diphosphate = 5-phospho-alpha-D-ribose 1-diphosphate + adenine. It functions in the pathway purine metabolism; AMP biosynthesis via salvage pathway; AMP from adenine: step 1/1. Functionally, catalyzes a salvage reaction resulting in the formation of AMP, that is energically less costly than de novo synthesis. This is Adenine phosphoribosyltransferase from Thermobifida fusca (strain YX).